The sequence spans 76 residues: Immune protein Tsi5 (76 aa).

The next 2 membrane-spanning stretches (helical) occupy residues 19-39 (LLMT…EWFF) and 43-63 (WVTV…LYLY).

The protein resides in the membrane. Its function is as follows. Immunity protein that plays a role in preventing early activation of toxin Tse5. This Pseudomonas aeruginosa (strain ATCC 15692 / DSM 22644 / CIP 104116 / JCM 14847 / LMG 12228 / 1C / PRS 101 / PAO1) protein is Immune protein Tsi5.